Consider the following 75-residue polypeptide: Veswaprin-b (75 aa).

Positions 1–24 are cleaved as a signal peptide; that stretch reads MSSGGLLLLLGLLTLWAELTPISG. A disordered region spans residues 23-42; sequence SGQDRPKKPGLRPPRPQKPP. The WAP; atypical domain occupies 27–72; that stretch reads RPKKPGLRPPRPQKPPCVRECKNDWRCPGEQKCCRYGCIYECRDPI. 3 disulfide bridges follow: cysteine 43–cysteine 64, cysteine 47–cysteine 59, and cysteine 53–cysteine 68.

It belongs to the venom waprin family. Expressed by the venom gland.

It localises to the secreted. Functionally, damages membranes of susceptible bacteria. Has no hemolytic activity. Not toxic to mice. Does not inhibit the proteinases elastase and cathepsin G. The polypeptide is Veswaprin-b (Demansia vestigiata (Lesser black whip snake)).